Consider the following 371-residue polypeptide: Vasculin (371 aa).

It belongs to the vasculin family.

The protein localises to the nucleus. In terms of biological role, functions as a GC-rich promoter-specific transactivating transcription factor. In Xenopus laevis (African clawed frog), this protein is Vasculin (gpbp1).